A 344-amino-acid polypeptide reads, in one-letter code: Dihydroorotate dehydrogenase (quinone) (344 aa).

FMN-binding positions include 65–69 (AGLDK) and T89. Residue K69 coordinates substrate. 114 to 118 (NRMGF) contacts substrate. FMN-binding residues include N145 and N178. N178 is a substrate binding site. The active-site Nucleophile is the S181. Residue N183 participates in substrate binding. FMN contacts are provided by K223 and T251. A substrate-binding site is contributed by 252–253 (NT). Residues G274, G303, and 324-325 (YS) contribute to the FMN site.

Belongs to the dihydroorotate dehydrogenase family. Type 2 subfamily. In terms of assembly, monomer. The cofactor is FMN.

It localises to the cell membrane. The catalysed reaction is (S)-dihydroorotate + a quinone = orotate + a quinol. It participates in pyrimidine metabolism; UMP biosynthesis via de novo pathway; orotate from (S)-dihydroorotate (quinone route): step 1/1. Its function is as follows. Catalyzes the conversion of dihydroorotate to orotate with quinone as electron acceptor. This chain is Dihydroorotate dehydrogenase (quinone), found in Cupriavidus necator (strain ATCC 17699 / DSM 428 / KCTC 22496 / NCIMB 10442 / H16 / Stanier 337) (Ralstonia eutropha).